The primary structure comprises 395 residues: Teichoic acid D-alanyltransferase (395 aa).

Residues 1 to 6 lie on the Extracellular side of the membrane; that stretch reads MTPYSS. Residues 7 to 26 traverse the membrane as a helical segment; sequence FLFFILLGILLLPTIILGLN. The Cytoplasmic portion of the chain corresponds to 27–30; the sequence is GKRF. Residues 31-46 traverse the membrane as a helical segment; that stretch reads QAYNMFISIIILALIF. Residues 47 to 50 lie on the Extracellular side of the membrane; that stretch reads SHDL. A helical membrane pass occupies residues 51–76; it reads HGVIALCLFTIWQVLLISGYLAYRQK. Topologically, residues 77–79 are cytoplasmic; sequence ANS. Residues 80 to 104 form a helical membrane-spanning segment; that stretch reads GFVFCGAVIASILPLFLSKIWPFLS. Residues 105–120 are Extracellular-facing; sequence HPQPHHPPHNLISFLG. Residues 121–137 form a helical membrane-spanning segment; sequence ISYLTFKGVQLIMEARD. The Cytoplasmic segment spans residues 138–145; the sequence is GLLKEQLP. Residues 146–175 lie within the membrane without spanning it; sequence LHRLLYFILFFPTISSGPIDRYRRFVKDEQ. Topologically, residues 176-179 are cytoplasmic; it reads KAWT. A helical membrane pass occupies residues 180–223; the sequence is KEEYADLLYTGIHKIFIGFLYKFIIGYAINTYFIMNLPAITHNK. Position 224 (I224) is a topological domain, extracellular. A helical membrane pass occupies residues 225 to 256; it reads LGNLLYMYGYSMYLFFDFAGYTMFAVGVSYIM. Residues 257 to 266 are Cytoplasmic-facing; it reads GIKSPENFNK. Residues 267 to 303 lie within the membrane without spanning it; that stretch reads PFISKNIKDFWNRWHMSLSFWFRDYVFMRFVFWMTKK. Over 304–308 the chain is Cytoplasmic; it reads KWIKN. A helical transmembrane segment spans residues 309 to 328; sequence RMAVSNIGYFLLFMLMGVWH. H328 is a catalytic residue. At 329–333 the chain is on the extracellular side; it reads GLAPQ. A helical transmembrane segment spans residues 334 to 351; that stretch reads YIIYGLYHAVLMTCYNFF. Residues 352-364 are Cytoplasmic-facing; sequence EKWNKKYKWLPSN. A helical membrane pass occupies residues 365 to 387; that stretch reads RWTTILAIVITFHFVCFGFYIFS. Over 388-395 the chain is Extracellular; it reads GKPFHHHH.

The protein belongs to the membrane-bound acyltransferase family.

It is found in the cell membrane. It functions in the pathway cell wall biogenesis; lipoteichoic acid biosynthesis. Its function is as follows. O-acyltransferase that catalyzes D-alanylation of both teichoic acid and lipoteichoic acid (LTA). D-alanylation of LTA plays an important role in modulating the properties of the cell wall in Gram-positive bacteria, influencing the net charge of the cell wall. Catalyzes D-alanylation from DltC carrier protein. This Bacillus subtilis (strain 168) protein is Teichoic acid D-alanyltransferase.